The following is a 622-amino-acid chain: Chaperone protein HscA homolog (622 aa).

Belongs to the heat shock protein 70 family.

Its function is as follows. Chaperone involved in the maturation of iron-sulfur cluster-containing proteins. Has a low intrinsic ATPase activity which is markedly stimulated by HscB. The sequence is that of Chaperone protein HscA homolog from Aromatoleum aromaticum (strain DSM 19018 / LMG 30748 / EbN1) (Azoarcus sp. (strain EbN1)).